The sequence spans 514 residues: Alpha-amylase (514 aa).

A signal peptide spans 1 to 31; the sequence is MIQKRKRTVSFRLVLMCTLLFVSLPITKTSA. Residues Asn-133, Asp-190, Ala-212, Asp-214, Asp-225, Asp-231, Asp-233, and Asp-235 each contribute to the Ca(2+) site. Position 190 (Asp-190) interacts with Na(+). Asp-214, Asp-225, and Asp-231 together coordinate Na(+). The Nucleophile role is filled by Asp-262. His-266 is a Ca(2+) binding site. Glu-292 functions as the Proton donor in the catalytic mechanism. The Ca(2+) site is built by Gly-331, Asp-438, and Asp-461.

It belongs to the glycosyl hydrolase 13 family. Monomer. It depends on Ca(2+) as a cofactor. The cofactor is Na(+).

The protein localises to the secreted. It catalyses the reaction Endohydrolysis of (1-&gt;4)-alpha-D-glucosidic linkages in polysaccharides containing three or more (1-&gt;4)-alpha-linked D-glucose units.. In Bacillus amyloliquefaciens (Bacillus velezensis), this protein is Alpha-amylase.